We begin with the raw amino-acid sequence, 366 residues long: tRNA/tmRNA (uracil-C(5))-methyltransferase (366 aa).

S-adenosyl-L-methionine is bound by residues Q190, Y218, N223, E239, and D299. C324 serves as the catalytic Nucleophile. E358 acts as the Proton acceptor in catalysis.

Belongs to the class I-like SAM-binding methyltransferase superfamily. RNA M5U methyltransferase family. TrmA subfamily.

The enzyme catalyses uridine(54) in tRNA + S-adenosyl-L-methionine = 5-methyluridine(54) in tRNA + S-adenosyl-L-homocysteine + H(+). It carries out the reaction uridine(341) in tmRNA + S-adenosyl-L-methionine = 5-methyluridine(341) in tmRNA + S-adenosyl-L-homocysteine + H(+). In terms of biological role, dual-specificity methyltransferase that catalyzes the formation of 5-methyluridine at position 54 (m5U54) in all tRNAs, and that of position 341 (m5U341) in tmRNA (transfer-mRNA). The polypeptide is tRNA/tmRNA (uracil-C(5))-methyltransferase (Escherichia coli O127:H6 (strain E2348/69 / EPEC)).